A 735-amino-acid polypeptide reads, in one-letter code: Urea active transporter (735 aa).

The Cytoplasmic portion of the chain corresponds to 1-14 (MGEFKPPLPQGAGY). Residues 15 to 35 (AIVLGLGAVFAGMMVLTTYLL) form a helical membrane-spanning segment. Over 36 to 85 (KRYQKEIITAEEFTTAGRSVKTGLVAAAVVSSWIWCSTLLTSSTKEYADG) the chain is Extracellular. The helical transmembrane segment at 86–106 (IFGGYAYAAGACFQIIAFAIL) threads the bilayer. Topologically, residues 107 to 130 (AIKTKQMAPNAHTYLELVRTRYGK) are cytoplasmic. A helical membrane pass occupies residues 131–151 (IGHGCYLFYAIATNILVTSML). Topologically, residues 152–166 (LTSGSAVFSDLTGMN) are extracellular. Residues 167-187 (TIASCFLLPVGVVVYTLFGGI) form a helical membrane-spanning segment. Over 188–189 (KA) the chain is Cytoplasmic. The helical transmembrane segment at 190–210 (TFLTDYMHTCVIIIIVLVFAF) threads the bilayer. Residues 211-253 (KVYATSDVLGSPGKVYDLVREAAKRHPVDGNYQGEYMTMTSKS) are Extracellular-facing. A helical transmembrane segment spans residues 254-274 (AGILLIINLIGNFGTVFLDNG). Over 275 to 295 (YWNKAISASPAASLKAYAIGG) the chain is Cytoplasmic. Residues 296 to 316 (LAWFAVPSLISLTMGLACLAV) traverse the membrane as a helical segment. The Extracellular portion of the chain corresponds to 317-343 (ETSPNFPTYPDPLTSFQANSGLVLPAA). Residues 344 to 364 (AIAIMGKGGAVASLLMIFMAV) form a helical membrane-spanning segment. Residues 365-403 (TSAMSAELIAVSSVFTYDIYREYIDPRASGKKLIYTSHV) are Cytoplasmic-facing. The helical transmembrane segment at 404 to 424 (ACIFFGLAMSGFSVGLYYGGI) threads the bilayer. Ser-425 is a topological domain (extracellular). Residues 426–446 (MGYIYEMMGIIISSAVLPVVL) form a helical membrane-spanning segment. The Cytoplasmic portion of the chain corresponds to 447–454 (TLCSKDMN). The chain crosses the membrane as a helical span at residues 455–475 (LVAAVVSPILGTGLAIMSWLV). The Extracellular portion of the chain corresponds to 476 to 496 (CTKSLYKELTVDTTFMDYPML). Residues 497 to 517 (TGNLVALLSPAIFIPILTYVF) traverse the membrane as a helical segment. Over 518–618 (KPQNFDWEKM…EQRELARGLK (101 aa)) the chain is Cytoplasmic. The disordered stretch occupies residues 553-572 (ANDKEQEEETNSLVSDSEKN). Residues 619–639 (IAYFLCVFFALAFLVVWPMPM) form a helical membrane-spanning segment. Over 640-650 (YGSKYIFSKKF) the chain is Extracellular. A helical membrane pass occupies residues 651-671 (FTGWVVVMIIWLFFSAFAVCI). Topologically, residues 672–735 (YPLWEGRHGI…SHFGQVDEII (64 aa)) are cytoplasmic.

This sequence belongs to the sodium:solute symporter (SSF) (TC 2.A.21) family. May polymerize.

It localises to the membrane. Functionally, required for active transport of urea. This is Urea active transporter (DUR3) from Saccharomyces cerevisiae (strain ATCC 204508 / S288c) (Baker's yeast).